A 462-amino-acid polypeptide reads, in one-letter code: tRNA modification GTPase MnmE (462 aa).

Arg27, Glu89, and Arg128 together coordinate (6S)-5-formyl-5,6,7,8-tetrahydrofolate. Residues 224-383 (GLATAIVGRP…LDERIAKLFF (160 aa)) enclose the TrmE-type G domain. A K(+)-binding site is contributed by Asn234. Residues 234-239 (NVGKSS), 253-259 (TDVAGTT), and 278-281 (DTAG) contribute to the GTP site. Residue Ser238 participates in Mg(2+) binding. 3 residues coordinate K(+): Thr253, Val255, and Thr258. Residue Thr259 coordinates Mg(2+). Position 462 (Lys462) interacts with (6S)-5-formyl-5,6,7,8-tetrahydrofolate.

It belongs to the TRAFAC class TrmE-Era-EngA-EngB-Septin-like GTPase superfamily. TrmE GTPase family. As to quaternary structure, homodimer. Heterotetramer of two MnmE and two MnmG subunits. K(+) is required as a cofactor.

The protein resides in the cytoplasm. Its function is as follows. Exhibits a very high intrinsic GTPase hydrolysis rate. Involved in the addition of a carboxymethylaminomethyl (cmnm) group at the wobble position (U34) of certain tRNAs, forming tRNA-cmnm(5)s(2)U34. This is tRNA modification GTPase MnmE from Lacticaseibacillus paracasei (strain ATCC 334 / BCRC 17002 / CCUG 31169 / CIP 107868 / KCTC 3260 / NRRL B-441) (Lactobacillus paracasei).